A 73-amino-acid chain; its full sequence is Dipeptidyl peptidase 3 (73 aa).

This sequence belongs to the peptidase M49 family. Requires Zn(2+) as cofactor.

It localises to the membrane. It catalyses the reaction Release of an N-terminal dipeptide from a peptide comprising four or more residues, with broad specificity. Also acts on dipeptidyl 2-naphthylamides.. Functionally, degrades neuropeptide proctolin (RYLPT) by cleavage between Tyr and Leu residues. The polypeptide is Dipeptidyl peptidase 3 (Blaberus craniifer (Death's head cockroach)).